The chain runs to 78 residues: UPF0291 protein Ldb1355 (78 aa).

Belongs to the UPF0291 family.

The protein localises to the cytoplasm. The chain is UPF0291 protein Ldb1355 from Lactobacillus delbrueckii subsp. bulgaricus (strain ATCC 11842 / DSM 20081 / BCRC 10696 / JCM 1002 / NBRC 13953 / NCIMB 11778 / NCTC 12712 / WDCM 00102 / Lb 14).